Reading from the N-terminus, the 633-residue chain is Pentatricopeptide repeat-containing protein At3g24000, mitochondrial (633 aa).

The transit peptide at 1 to 63 directs the protein to the mitochondrion; that stretch reads MALRFPPRLL…SYIPADRRFY (63 aa). PPR repeat units follow at residues 94–124, 125–159, 160–194, 195–225, 226–260, 261–295, 296–326, 327–361, 362–396, and 397–431; these read DIVM…MPQR, DFVT…GYSP, NEFT…GFDS, NVHV…LESR, NDVS…GFRP, SHFS…GEKL, VAFA…LAKR, DVVS…GIRP, NEIS…GIVP, and EAWH…PTAA. A type E motif region spans residues 432–507; it reads IWKALLNACR…EPACSWVEIE (76 aa). The segment at 508-538 is type E(+) motif; sequence NAIHMFVANDERHPQREEIARKWEEVLAKIK. The segment at 539 to 633 is type DYW motif; the sequence is ELGYVPDTSH…DGNCSCKDYW (95 aa).

Belongs to the PPR family. PCMP-H subfamily.

It localises to the mitochondrion. In Arabidopsis thaliana (Mouse-ear cress), this protein is Pentatricopeptide repeat-containing protein At3g24000, mitochondrial (PCMP-H87).